The sequence spans 331 residues: Geranylgeranyl transferase type-2 subunit beta (331 aa).

An N-acetylglycine modification is found at G2. A Phosphothreonine modification is found at T3. PFTB repeat units lie at residues 20 to 61 (LEKH…DLMG), 68 to 109 (REEI…TLYD), 116 to 157 (VNKV…ALLG), 164 to 205 (VEKA…AITS), 212 to 253 (SDLL…KIIG), and 260 to 302 (REKL…SLLG). Position 190–192 (190–192 (HAG)) interacts with geranylgeranyl diphosphate. Residues D238 and C240 each coordinate Zn(2+). Geranylgeranyl diphosphate is bound at residue 241–244 (YSWW). H290 is a Zn(2+) binding site.

Belongs to the protein prenyltransferase subunit beta family. As to quaternary structure, heterotrimer composed of RABGGTA, RABGGTB and CHM; within this trimer, RABGGTA and RABGGTB form the catalytic component B, while CHM (component A) mediates peptide substrate binding. The Rab GGTase dimer (RGGT) interacts with CHM (component A) prior to Rab protein binding; the association is stabilized by geranylgeranyl pyrophosphate (GGpp). The CHM:RGGT:Rab complex is destabilized by GGpp. Interaction of RABGGTB with prenylated PTP4A2 precludes its association with RABGGTA and inhibits enzyme activity. Interacts with CHODL. Interacts with non-phosphorylated form of RAB8A; phosphorylation of RAB8A at 'Thr-72' disrupts this interaction. Zn(2+) serves as cofactor.

The catalysed reaction is geranylgeranyl diphosphate + L-cysteinyl-[protein] = S-geranylgeranyl-L-cysteinyl-[protein] + diphosphate. The enzymatic reaction requires the aid of a Rab escort protein (also called component A). In terms of biological role, catalyzes the transfer of a geranylgeranyl moiety from geranylgeranyl diphosphate to both cysteines of Rab proteins with the C-terminal sequence -XXCC, -XCXC and -CCXX, such as RAB1A, RAB3A, RAB5A and RAB7A. This is Geranylgeranyl transferase type-2 subunit beta (RABGGTB) from Homo sapiens (Human).